The primary structure comprises 431 residues: Gamma-glutamyl phosphate reductase (431 aa).

This sequence belongs to the gamma-glutamyl phosphate reductase family.

Its subcellular location is the cytoplasm. It carries out the reaction L-glutamate 5-semialdehyde + phosphate + NADP(+) = L-glutamyl 5-phosphate + NADPH + H(+). It participates in amino-acid biosynthesis; L-proline biosynthesis; L-glutamate 5-semialdehyde from L-glutamate: step 2/2. In terms of biological role, catalyzes the NADPH-dependent reduction of L-glutamate 5-phosphate into L-glutamate 5-semialdehyde and phosphate. The product spontaneously undergoes cyclization to form 1-pyrroline-5-carboxylate. This chain is Gamma-glutamyl phosphate reductase, found in Acetivibrio thermocellus (strain ATCC 27405 / DSM 1237 / JCM 9322 / NBRC 103400 / NCIMB 10682 / NRRL B-4536 / VPI 7372) (Clostridium thermocellum).